Here is an 811-residue protein sequence, read N- to C-terminus: Ent-13-epi-manoyl oxide synthase KSL2, chloroplastic (811 aa).

The N-terminal 49 residues, 1–49 (MALPLSTCLLFHPKESRSRRFCFSPASAASLKSGLHSATSAKIASMPTC), are a transit peptide targeting the chloroplast. Mg(2+)-binding residues include Asp550, Asp554, Asn694, and Glu702. The DDXXD motif motif lies at 550–554 (DDFFD).

Belongs to the terpene synthase family. Mg(2+) serves as cofactor.

The protein resides in the plastid. It is found in the chloroplast. It catalyses the reaction ent-8alpha-hydroxylabd-13-en-15-yl diphosphate = ent-13-epi-manoyl oxide + diphosphate. It participates in secondary metabolite biosynthesis; terpenoid biosynthesis. Involved in diterpenoid biosynthesis. Catalyzes the conversion of ent-8alpha-hydroxylabd-13-en-15-yl diphosphate to ent-13-epi-manoyl oxide. This Salvia miltiorrhiza (Chinese sage) protein is Ent-13-epi-manoyl oxide synthase KSL2, chloroplastic.